Consider the following 215-residue polypeptide: Protein FAM27D1 (215 aa).

The segment at 74 to 172 (QPKTHTHTGM…RGTQADLSSR (99 aa)) is disordered. Residues 87–108 (THRERERNTQRLRDRERRENGR) show a composition bias toward basic and acidic residues. Basic residues predominate over residues 109–122 (HTHRHTHTLTHTHT). 2 stretches are compositionally biased toward basic and acidic residues: residues 123 to 139 (HRDT…ETHT) and 149 to 162 (SAHD…REQP). The segment covering 163 to 172 (RGTQADLSSR) has biased composition (polar residues).

It belongs to the FAM27 family.

The protein is Protein FAM27D1 (FAM27D1) of Homo sapiens (Human).